The chain runs to 299 residues: Formin-like protein 12 (299 aa).

The 295-residue stretch at 1–295 folds into the FH2 domain; sequence MASNCEKMLS…LEKRKMNIKQ (295 aa).

This sequence belongs to the formin-like family. Class-II subfamily.

The chain is Formin-like protein 12 (FH12) from Arabidopsis thaliana (Mouse-ear cress).